The primary structure comprises 91 residues: Large ribosomal subunit protein uL23 (91 aa).

This sequence belongs to the universal ribosomal protein uL23 family. In terms of assembly, part of the 50S ribosomal subunit. Contacts protein L29, and trigger factor when it is bound to the ribosome.

Its function is as follows. One of the early assembly proteins it binds 23S rRNA. One of the proteins that surrounds the polypeptide exit tunnel on the outside of the ribosome. Forms the main docking site for trigger factor binding to the ribosome. The chain is Large ribosomal subunit protein uL23 from Staphylococcus epidermidis (strain ATCC 35984 / DSM 28319 / BCRC 17069 / CCUG 31568 / BM 3577 / RP62A).